The chain runs to 824 residues: FT-interacting protein 1 (824 aa).

C2 domains lie at 48 to 170 (WLGL…PQWY), 217 to 341 (VRGE…SRWF), and 385 to 522 (YISD…THAY). The next 3 membrane-spanning stretches (helical) occupy residues 625-645 (AVSLFSGAAAAARWFADVCHW), 657-677 (LLLILVWYPELILPTVFLYMF), and 764-784 (ATCLFVVFCLVAAVVLYVTPF).

Belongs to the MCTP family. In terms of assembly, interacts with RFT1 and PI4KG4. As to expression, specifically expressed in the phloem including companion cells.

It localises to the endoplasmic reticulum membrane. Functionally, involved in the export of the long day-specific flower-promoting signal (florigen) RFT1 from the phloem companion cells to sieve elements. Promotes flowering under long days through the transport of RFT1 from the leaves to the shoot apical meristem (SAM). In Oryza sativa subsp. japonica (Rice), this protein is FT-interacting protein 1.